Reading from the N-terminus, the 337-residue chain is Cytoskeleton protein RodZ (337 aa).

Topologically, residues 1 to 111 (MNTEATHDQN…LGKRRKKRDG (111 aa)) are cytoplasmic. An HTH cro/C1-type domain is found at 19–71 (LRNAREQLGLSQQAVAERLCLKVSTVRDIEEDKAPADLASTFLRGYIRSYARL). The segment at residues 30-49 (QQAVAERLCLKVSTVRDIEE) is a DNA-binding region (H-T-H motif). Residues 112 to 132 (WLMTFTWLVLFVVIGLSGAWW) traverse the membrane as a helical; Signal-anchor for type II membrane protein segment. The Periplasmic segment spans residues 133 to 337 (WQDHKAQQEE…TLNAEQSPAQ (205 aa)). The span at 145–167 (TMADQSSAELSSNSEQGQSVPLN) shows a compositional bias: polar residues. The disordered stretch occupies residues 145-236 (TMADQSSAEL…TAATTPDGAA (92 aa)). Over residues 168 to 207 (TSTTTDPATTSTPPASVDTTATNTQTPAVTAPAPAVDPQQ) the composition is skewed to low complexity. The span at 208-218 (NAVVSPSQANV) shows a compositional bias: polar residues. Positions 219-236 (DTAATPAPTAATTPDGAA) are enriched in low complexity.

Belongs to the RodZ family.

Its subcellular location is the cell inner membrane. Its function is as follows. Cytoskeletal protein that is involved in cell-shape control through regulation of the length of the long axis. The chain is Cytoskeleton protein RodZ from Escherichia coli O9:H4 (strain HS).